The sequence spans 311 residues: Aspartate carbamoyltransferase catalytic subunit (311 aa).

Residues Arg-55 and Thr-56 each contribute to the carbamoyl phosphate site. Lys-83 lines the L-aspartate pocket. Residues Arg-105, His-134, and Gln-137 each contribute to the carbamoyl phosphate site. 2 residues coordinate L-aspartate: Arg-167 and Arg-226. Carbamoyl phosphate contacts are provided by Gly-267 and Pro-268.

Belongs to the aspartate/ornithine carbamoyltransferase superfamily. ATCase family. Heterododecamer (2C3:3R2) of six catalytic PyrB chains organized as two trimers (C3), and six regulatory PyrI chains organized as three dimers (R2).

The enzyme catalyses carbamoyl phosphate + L-aspartate = N-carbamoyl-L-aspartate + phosphate + H(+). It participates in pyrimidine metabolism; UMP biosynthesis via de novo pathway; (S)-dihydroorotate from bicarbonate: step 2/3. Catalyzes the condensation of carbamoyl phosphate and aspartate to form carbamoyl aspartate and inorganic phosphate, the committed step in the de novo pyrimidine nucleotide biosynthesis pathway. This chain is Aspartate carbamoyltransferase catalytic subunit, found in Corynebacterium jeikeium (strain K411).